Reading from the N-terminus, the 481-residue chain is UDP-N-acetylmuramate--L-alanine ligase (481 aa).

Gly115–Thr121 lines the ATP pocket.

This sequence belongs to the MurCDEF family.

The protein localises to the cytoplasm. It carries out the reaction UDP-N-acetyl-alpha-D-muramate + L-alanine + ATP = UDP-N-acetyl-alpha-D-muramoyl-L-alanine + ADP + phosphate + H(+). Its pathway is cell wall biogenesis; peptidoglycan biosynthesis. Cell wall formation. The protein is UDP-N-acetylmuramate--L-alanine ligase of Granulibacter bethesdensis (strain ATCC BAA-1260 / CGDNIH1).